A 146-amino-acid chain; its full sequence is Hemoglobin subunit beta (146 aa).

Residues 2–146 (HWTAEEKSAI…VAHALAHQYH (145 aa)) enclose the Globin domain. Heme b-binding residues include histidine 63 and histidine 92.

The protein belongs to the globin family. In terms of assembly, heterotetramer of two alpha chains and two beta chains. Oxygenation results in dissociation to dimers. As to expression, red blood cells.

Functionally, involved in oxygen transport from the lung to the various peripheral tissues. The polypeptide is Hemoglobin subunit beta (HBB) (Erythrolamprus miliaris (South American water snake)).